Here is an 89-residue protein sequence, read N- to C-terminus: Small ribosomal subunit protein uS14A (89 aa).

This sequence belongs to the universal ribosomal protein uS14 family. As to quaternary structure, part of the 30S ribosomal subunit. Contacts proteins S3 and S10.

In terms of biological role, binds 16S rRNA, required for the assembly of 30S particles and may also be responsible for determining the conformation of the 16S rRNA at the A site. This Staphylococcus aureus (strain Newman) protein is Small ribosomal subunit protein uS14A.